A 2108-amino-acid chain; its full sequence is Mucin-5B (2108 aa).

An N-terminal signal peptide occupies residues 1–21; sequence MEIKKERSFWIFCLIWSFCKG. Residues 36–203 enclose the VWFD 1 domain; that stretch reads SECTTWGNFH…KVEDPSEKCP (168 aa). Cystine bridges form between Cys38–Cys166 and Cys60–Cys202. Residues 196–219 form a disordered region; it reads EDPSEKCPDVRPDDHTGRHPTEDD. One can recognise a TIL 1 domain in the interval 304-360; sequence CPSNMEYMECGNSCADTCADPERSKICKAPCTDGCFCPPGTILDDLGGKKCVPRDSC. A glycan (N-linked (GlcNAc...) (complex) asparagine) is linked at Asn381. A VWFD 2 domain is found at 398 to 570; it reads GSCSIDGGFH…NSWKTRASCF (173 aa). Disulfide bonds link Cys400/Cys534, Cys422/Cys569, and Cys443/Cys451. 4 N-linked (GlcNAc...) (complex) asparagine glycosylation sites follow: Asn528, Asn599, Asn680, and Asn772. The TIL 2 domain maps to 666-723; that stretch reads CPETMVYNYSVKYCNQSCRSLDEPDPLCKVQIAPMEGCGCPEGTYLNDEEECVTPDDC. The region spanning 782 to 825 is the TIL 3 domain; sequence GSECQKSCKTQDMHCYVTECVSGCMCPDGLVLDGSGGCIPKDQC. The VWFC 1 domain maps to 825-897; that stretch reads CPCVHGGHFY…DYILAQDFCP (73 aa). Residue Asn855 is glycosylated (N-linked (GlcNAc...) (complex) asparagine). One can recognise a VWFD 3 domain in the interval 863–1033; the sequence is GTCTVYGNGH…NSWKITSTCS (171 aa). 4 disulfides stabilise this stretch: Cys865/Cys997, Cys887/Cys1032, Cys896/Cys994, and Cys914/Cys921. Asn1036, Asn1219, Asn1371, and Asn1452 each carry an N-linked (GlcNAc...) (complex) asparagine glycan. A VWFD 4 domain is found at 1429–1613; the sequence is CICSGWGNEH…APVSTNRYCN (185 aa). 3 disulfide bridges follow: Cys1431–Cys1573, Cys1453–Cys1612, and Cys1477–Cys1485. 5 N-linked (GlcNAc...) (complex) asparagine glycosylation sites follow: Asn1567, Asn1639, Asn1792, Asn1807, and Asn1841. In terms of domain architecture, VWFC 2 spans 1761–1832; the sequence is CGCTAQDGSV…DPCCTETVCE (72 aa). One can recognise a VWFC 3 domain in the interval 1870-1937; it reads GVCVSEGVEF…KEGQCCSQCQ (68 aa). An N-linked (GlcNAc...) (complex) asparagine glycan is attached at Asn1964. Cystine bridges form between Cys2010–Cys2066, Cys2031–Cys2080, Cys2042–Cys2096, and Cys2046–Cys2098. Positions 2010 to 2104 constitute a CTCK domain; sequence CIDLPHKCKR…ECGCVETKCP (95 aa).

Homomultimer; disulfide-linked. The N- and C-terminus mediate their assembly into higher order structures to form filaments. The CTCK domains of two polypeptides associate in the endoplasmic reticulum to generate intermolecularly disulfide-bonded dimers. These dimers progress to the Golgi apparatus, which is a more acidic environment than the endoplasmic reticulum. Under acidic conditions, the N-termini form non-covalent intermolecular interactions that juxtapose assemblies from different CTCK-linked dimers to produce long, disulfide-linked polymers that remain highly compact until secretion. N-glycosylated. Complex glycosylation with bisecting N-acetylglucosamine. Contains mainly N-acetylglucosamine (3.1-8.5%), mannose (2.9-4.6%), a small amount of galactose (1.1-4.35) and sialic acid (0.3-1.3%). Most abundant glycan is composed of a GlcNAc(2)Man(3) core, a bisecting GlcNAc and another 3 GlcNAc antannae located on the mannoses of the core. Site Asn-1639 exists both in glycosylated and non-glycosylated forms.

The protein localises to the secreted. Functionally, ovomucin, the glycoprotein responsible for the gel properties of egg white, is composed for 2 subunits, alpha-ovomucin/MUC5B and beta-ovomucin/MUC6. The polypeptide is Mucin-5B (MUC5B) (Gallus gallus (Chicken)).